We begin with the raw amino-acid sequence, 364 residues long: Probable dual-specificity RNA methyltransferase RlmN (364 aa).

The active-site Proton acceptor is the glutamate 107. The Radical SAM core domain maps to 113-346; that stretch reads HDYGNSVCVT…ATIRREQGSD (234 aa). Cysteines 120 and 351 form a disulfide. The [4Fe-4S] cluster site is built by cysteine 127, cysteine 131, and cysteine 134. Residues 177–178, serine 209, 232–234, and asparagine 308 contribute to the S-adenosyl-L-methionine site; these read GE and SLH. Cysteine 351 acts as the S-methylcysteine intermediate in catalysis.

This sequence belongs to the radical SAM superfamily. RlmN family. [4Fe-4S] cluster serves as cofactor.

It localises to the cytoplasm. The catalysed reaction is adenosine(2503) in 23S rRNA + 2 reduced [2Fe-2S]-[ferredoxin] + 2 S-adenosyl-L-methionine = 2-methyladenosine(2503) in 23S rRNA + 5'-deoxyadenosine + L-methionine + 2 oxidized [2Fe-2S]-[ferredoxin] + S-adenosyl-L-homocysteine. The enzyme catalyses adenosine(37) in tRNA + 2 reduced [2Fe-2S]-[ferredoxin] + 2 S-adenosyl-L-methionine = 2-methyladenosine(37) in tRNA + 5'-deoxyadenosine + L-methionine + 2 oxidized [2Fe-2S]-[ferredoxin] + S-adenosyl-L-homocysteine. In terms of biological role, specifically methylates position 2 of adenine 2503 in 23S rRNA and position 2 of adenine 37 in tRNAs. Confers resistance to some classes of antibiotics. The polypeptide is Probable dual-specificity RNA methyltransferase RlmN (Staphylococcus aureus (strain bovine RF122 / ET3-1)).